The chain runs to 545 residues: Monocarboxylate transporter 8 (545 aa).

Residues 1–98 (MALPSPASEE…VETRGTARGF (98 aa)) are disordered. Ala2 carries the post-translational modification N-acetylalanine. The Cytoplasmic portion of the chain corresponds to 2 to 102 (ALPSPASEEA…GTARGFQPPE (101 aa)). Repeat copies occupy residues 29–50 (PVPEPEPEPEPEPEPDPEPVPV) and 51–72 (PPPEPQPEPEPQPLPDPAPLPE). Residues 29–72 (PVPEPEPEPEPEPEPDPEPVPVPPPEPQPEPEPQPLPDPAPLPE) are 2 X 22 AA approximate tandem repeats. Over residues 33 to 45 (PEPEPEPEPEPDP) the composition is skewed to acidic residues. Positions 46-70 (EPVPVPPPEPQPEPEPQPLPDPAPL) are enriched in pro residues. A helical membrane pass occupies residues 103–123 (GGFGWIVVFAATWCNGSIFGI). The Extracellular segment spans residues 124 to 149 (HNSVGILYSMLLEEEKEKNRQVEFQA). The chain crosses the membrane as a helical span at residues 150–170 (AWVGALAMGMIFFCSPIVSIF). The Cytoplasmic portion of the chain corresponds to 171–177 (TDRLGCR). A helical membrane pass occupies residues 178–198 (ITATTGAAVAFIGLHTSSFTS). Topologically, residues 199 to 206 (SLSLRYFT) are extracellular. A helical transmembrane segment spans residues 207 to 227 (YGILFGCGCSFAFQPSLVILG). Over 228–235 (HYFQRRLG) the chain is Cytoplasmic. A helical transmembrane segment spans residues 236–256 (LANGVVSAGSSIFSMSFPFLI). Over 257-264 (KMLGDKIK) the chain is Extracellular. A helical membrane pass occupies residues 265–285 (LAQTFQVLSTFMFVLTLLSLT). Topologically, residues 286 to 328 (YRPLLPSSQDTPSKRGAHTLRQRFLVQFRKYFNMRVFRQRTYR) are cytoplasmic. Residues 329 to 349 (IWAFGIAAAALGYFVPYVHLM) traverse the membrane as a helical segment. The Extracellular portion of the chain corresponds to 350 to 362 (KYVEDKFKEIKET). Residues 363-383 (WVLLVCIGATSGLGRLVSGHI) traverse the membrane as a helical segment. Residues 384–392 (SDSIPGLKK) lie on the Cytoplasmic side of the membrane. A helical membrane pass occupies residues 393–413 (IYLQVLSFLLLGLMSMMIPLC). Topologically, residues 414 to 415 (RD) are extracellular. A helical transmembrane segment spans residues 416-436 (FGGLIVVCLFLGLCDGFFITI). Over 437 to 453 (MAPIAFELVGPMQASQA) the chain is Cytoplasmic. The chain crosses the membrane as a helical span at residues 454–474 (IGYLLGMMALPMIAGPPIAGL). The Extracellular segment spans residues 475-483 (LRNCFGDYH). A helical transmembrane segment spans residues 484–504 (VAFYFAGVPPIIGAVILFFVP). Topologically, residues 505–545 (LMHQRMFKKEQRDSSKDKMLSHDPDPNGELLPGSPTPEEPI) are cytoplasmic. A compositionally biased stretch (basic and acidic residues) spans 514–529 (EQRDSSKDKMLSHDPD). Residues 514–545 (EQRDSSKDKMLSHDPDPNGELLPGSPTPEEPI) form a disordered region. Thr540 bears the Phosphothreonine mark.

Belongs to the major facilitator superfamily. Monocarboxylate porter (TC 2.A.1.13) family. As to quaternary structure, monomer. Homodimer. Homooligomer. As to expression, expressed in cerebral microvessels.

It localises to the cell membrane. It is found in the apical cell membrane. It catalyses the reaction 3,3',5-triiodo-L-thyronine(out) = 3,3',5-triiodo-L-thyronine(in). The enzyme catalyses 3,3',5'-triiodo-L-thyronine(out) = 3,3',5'-triiodo-L-thyronine(in). It carries out the reaction L-thyroxine(out) = L-thyroxine(in). The catalysed reaction is 3,3'-diiodo-L-thyronine(out) = 3,3'-diiodo-L-thyronine(in). Its function is as follows. Specific thyroid hormone transmembrane transporter, that mediates both uptake and efflux of thyroid hormones across the cell membrane independently of pH or a Na(+) gradient. Major substrates are the iodothyronines T3 and T4 and to a lesser extent rT3 and 3,3-diiodothyronine (3,3'-T2). Acts as an important mediator of thyroid hormone transport, especially T3, through the blood-brain barrier. This Mus musculus (Mouse) protein is Monocarboxylate transporter 8 (Slc16a2).